Here is a 491-residue protein sequence, read N- to C-terminus: MDRVGSLPDELLSHILSFLTTKEAALTSLLSKRWRYLIAFVPNLAFDDIVFLHPEEGKPERDEIRQSFMDFVDRVLALQAESPIKKFSLKCRIGVDSDRVDGWISNVLNRGVSELDLLIILGMTMEDSYRLSPKGFASKTLVKLEIGCGIDISWVAGSIFLPMLKTLVLDSVWFYVDKFETLLLALPALEELVLVDVNWLDSDVTISNASLKTLTIDSDGHLGTFSFDTPSLVYFCYSDYAAEDYPVVKMENLREARIFLLVTDNEIERVRLPINDGLEDAMDNVVLRFGHVGKLMNGIRNVEYLELSADTLEVLSLCCESMPVFKNLKSLAIKSTEGRGWQAMPVLLRNCPHLEFLLIEGLLHHVTDKCGDACDCVPREDKGRSLTSCPVNMLEIHGFRGTKKEMQMIKHFLDYFPSLKEMDIYADEDGPTNLEAPGMFEQITQLFTLYDEFYTCDVQFMVRGSLYKKLTAQCCVFKEENLPHRLVRTLG.

The F-box domain occupies 1-49 (MDRVGSLPDELLSHILSFLTTKEAALTSLLSKRWRYLIAFVPNLAFDDI).

In terms of assembly, part of a SCF (ASK-cullin-F-box) protein ligase complex. Interacts with ASK4.

The protein resides in the nucleus. It functions in the pathway protein modification; protein ubiquitination. Its function is as follows. Component of SCF(ASK-cullin-F-box) E3 ubiquitin ligase complexes, which may mediate the ubiquitination and subsequent proteasomal degradation of target proteins. This is F-box protein At3g59000 from Arabidopsis thaliana (Mouse-ear cress).